A 147-amino-acid polypeptide reads, in one-letter code: Augurin (147 aa).

Residues Met-1–Gly-31 form the signal peptide. 2 propeptides span residues Asn-32 to Pro-68 and Ser-132 to Tyr-147.

The protein belongs to the augurin family.

The protein resides in the secreted. The protein localises to the cytoplasm. It is found in the apical cell membrane. Probable hormone that may attenuate cell proliferation and induce senescence of oligodendrocyte and neural precursor cells in the central nervous system. ECRG4-induced senescence is characterized by G1 arrest, RB1 dephosphorylation and accelerated CCND1 and CCND3 proteasomal degradation. This is Augurin from Bos taurus (Bovine).